Here is a 254-residue protein sequence, read N- to C-terminus: Triosephosphate isomerase (254 aa).

12–14 (NWK) provides a ligand contact to substrate. Catalysis depends on H99, which acts as the Electrophile. Residue E169 is the Proton acceptor of the active site. Residues G175, S214, and 235-236 (GG) contribute to the substrate site.

The protein belongs to the triosephosphate isomerase family. As to quaternary structure, homodimer.

It localises to the cytoplasm. It carries out the reaction D-glyceraldehyde 3-phosphate = dihydroxyacetone phosphate. It participates in carbohydrate biosynthesis; gluconeogenesis. It functions in the pathway carbohydrate degradation; glycolysis; D-glyceraldehyde 3-phosphate from glycerone phosphate: step 1/1. Its function is as follows. Involved in the gluconeogenesis. Catalyzes stereospecifically the conversion of dihydroxyacetone phosphate (DHAP) to D-glyceraldehyde-3-phosphate (G3P). The chain is Triosephosphate isomerase from Bartonella bacilliformis (strain ATCC 35685 / KC583 / Herrer 020/F12,63).